The primary structure comprises 34 residues: Peptide 9797 (34 aa).

As to expression, expressed by the venom gland.

It is found in the secreted. This is Peptide 9797 from Tityus stigmurus (Brazilian scorpion).